Consider the following 324-residue polypeptide: Hairy/enhancer-of-split related with YRPW motif protein 2 (324 aa).

Positions 1 to 34 (MKRPCEDSTSDSDMDETIDVGSENNYSGQSNGSF) are disordered. A compositionally biased stretch (acidic residues) spans 8-18 (STSDSDMDETI). The segment covering 22-34 (SENNYSGQSNGSF) has biased composition (polar residues). Positions 48–103 (ARKKRRGIIEKRRRDRINNSLSELRRLVPTAFEKQGSAKLEKAEILQMTVDHLKML) constitute a bHLH domain. The 36-residue stretch at 122-157 (LSIGFRECLTEVARYLSSVEGLDSSDPLRVRLVSHL) folds into the Orange domain. The segment covering 294 to 311 (SSSVSTSTTSQQSSGSSS) has biased composition (low complexity). Residues 294–324 (SSSVSTSTTSQQSSGSSSKPYRPWGTEVGAF) form a disordered region. A YRPW motif motif is present at residues 314 to 317 (YRPW).

It belongs to the HEY family.

It is found in the nucleus. Functionally, transcriptional repressor. Downstream effector of Notch signaling which regulates cell fate choice in angioblasts. Represses the venous cell fate, thereby promoting the arterial cell fate and aorta formation. In Danio rerio (Zebrafish), this protein is Hairy/enhancer-of-split related with YRPW motif protein 2 (hey2).